The following is a 100-amino-acid chain: Aspartyl/glutamyl-tRNA(Asn/Gln) amidotransferase subunit C (100 aa).

It belongs to the GatC family. In terms of assembly, heterotrimer of A, B and C subunits.

The enzyme catalyses L-glutamyl-tRNA(Gln) + L-glutamine + ATP + H2O = L-glutaminyl-tRNA(Gln) + L-glutamate + ADP + phosphate + H(+). The catalysed reaction is L-aspartyl-tRNA(Asn) + L-glutamine + ATP + H2O = L-asparaginyl-tRNA(Asn) + L-glutamate + ADP + phosphate + 2 H(+). Allows the formation of correctly charged Asn-tRNA(Asn) or Gln-tRNA(Gln) through the transamidation of misacylated Asp-tRNA(Asn) or Glu-tRNA(Gln) in organisms which lack either or both of asparaginyl-tRNA or glutaminyl-tRNA synthetases. The reaction takes place in the presence of glutamine and ATP through an activated phospho-Asp-tRNA(Asn) or phospho-Glu-tRNA(Gln). In Streptococcus mutans serotype c (strain ATCC 700610 / UA159), this protein is Aspartyl/glutamyl-tRNA(Asn/Gln) amidotransferase subunit C.